Reading from the N-terminus, the 110-residue chain is MPFGWGRGRGRRRKRRMIGFLPQVRHFYPAIPPVSIRQPPIIMTYEEFEALRLVDYEGLTQEEAGKRMGVSRGTLWRALTSARKKVAQMLVEGRELIILPQGNEVVSDEE.

Belongs to the UPF0251 family.

This is UPF0251 protein PYRAB12660 from Pyrococcus abyssi (strain GE5 / Orsay).